The chain runs to 151 residues: Large ribosomal subunit protein uL13 (151 aa).

A disordered region spans residues 129–151 (PTHPHDAQKPKELNINTIPGAES). Residues 131–140 (HPHDAQKPKE) are compositionally biased toward basic and acidic residues.

This sequence belongs to the universal ribosomal protein uL13 family. In terms of assembly, part of the 50S ribosomal subunit.

Its function is as follows. This protein is one of the early assembly proteins of the 50S ribosomal subunit, although it is not seen to bind rRNA by itself. It is important during the early stages of 50S assembly. The sequence is that of Large ribosomal subunit protein uL13 from Trichormus variabilis (strain ATCC 29413 / PCC 7937) (Anabaena variabilis).